We begin with the raw amino-acid sequence, 207 residues long: FMN-dependent NADH:quinone oxidoreductase 2 (207 aa).

Residues serine 9, 15 to 17 (SAS), and 97 to 100 (MWNF) each bind FMN.

The protein belongs to the azoreductase type 1 family. Homodimer. Requires FMN as cofactor.

The enzyme catalyses 2 a quinone + NADH + H(+) = 2 a 1,4-benzosemiquinone + NAD(+). The catalysed reaction is N,N-dimethyl-1,4-phenylenediamine + anthranilate + 2 NAD(+) = 2-(4-dimethylaminophenyl)diazenylbenzoate + 2 NADH + 2 H(+). Quinone reductase that provides resistance to thiol-specific stress caused by electrophilic quinones. Its function is as follows. Also exhibits azoreductase activity. Catalyzes the reductive cleavage of the azo bond in aromatic azo compounds to the corresponding amines. In Burkholderia lata (strain ATCC 17760 / DSM 23089 / LMG 22485 / NCIMB 9086 / R18194 / 383), this protein is FMN-dependent NADH:quinone oxidoreductase 2.